The following is a 151-amino-acid chain: Regulatory protein RecX (151 aa).

The protein belongs to the RecX family.

The protein resides in the cytoplasm. In terms of biological role, modulates RecA activity. The chain is Regulatory protein RecX from Chlorobium phaeobacteroides (strain BS1).